Here is a 250-residue protein sequence, read N- to C-terminus: ATP synthase subunit a (250 aa).

Transmembrane regions (helical) follow at residues 27–47, 83–103, 129–149, 191–211, and 219–239; these read TDTVLSTAIAALIVLALAFYL, IAPFVLPLAVTIFVFILISNW, INYVLALALFVFVCYHAAGIW, IFAGSILVALIALFPPYIMWA, and FDLFVGAIQAFIFALLTILYF.

Belongs to the ATPase A chain family. In terms of assembly, F-type ATPases have 2 components, CF(1) - the catalytic core - and CF(0) - the membrane proton channel. CF(1) has five subunits: alpha(3), beta(3), gamma(1), delta(1), epsilon(1). CF(0) has three main subunits: a(1), b(2) and c(9-12). The alpha and beta chains form an alternating ring which encloses part of the gamma chain. CF(1) is attached to CF(0) by a central stalk formed by the gamma and epsilon chains, while a peripheral stalk is formed by the delta and b chains.

It is found in the cell membrane. In terms of biological role, key component of the proton channel; it plays a direct role in the translocation of protons across the membrane. This chain is ATP synthase subunit a, found in Mycobacterium ulcerans (strain Agy99).